We begin with the raw amino-acid sequence, 129 residues long: M-zodatoxin-Lt8i (129 aa).

A signal peptide spans M1–S20. Positions K21–R60 are excised as a propeptide.

The protein belongs to the cationic peptide 06 (cytoinsectotoxin) family. As to expression, expressed by the venom gland.

It is found in the secreted. Insecticidal, cytolytic and antimicrobial peptide. Forms voltage-dependent, ion-permeable channels in membranes. At high concentration causes cell membrane lysis. The protein is M-zodatoxin-Lt8i (cit 1-6) of Lachesana tarabaevi (Spider).